A 590-amino-acid polypeptide reads, in one-letter code: Leishmanolysin (590 aa).

The signal sequence occupies residues 1-39 (MSVDSSSTHRHRSVAARLVRLAAAGAAVIAAVGTAAAWA). The propeptide at 40 to 87 (HAGAVQHRCIHDAMQARVRQSVARHHTAPGAVSAVGLSYVTLGAAPTV) is activation peptide. Cystine bridges form between cysteine 112-cysteine 129 and cysteine 178-cysteine 217. Histidine 251 provides a ligand contact to Zn(2+). The active site involves glutamate 252. Zn(2+) is bound at residue histidine 255. Asparagine 287 carries N-linked (GlcNAc...) asparagine glycosylation. 7 disulfide bridges follow: cysteine 301/cysteine 373, cysteine 380/cysteine 443, cysteine 393/cysteine 412, cysteine 402/cysteine 477, cysteine 454/cysteine 498, cysteine 503/cysteine 553, and cysteine 523/cysteine 546. Histidine 321 is a binding site for Zn(2+). Asparagine 565 carries GPI-anchor amidated asparagine lipidation. The propeptide at 566 to 590 (AAAGRRGPRAAATALLVAALLAVAL) is removed in mature form.

The protein belongs to the peptidase M8 family. The cofactor is Zn(2+).

The protein resides in the cell membrane. It carries out the reaction Preference for hydrophobic residues at P1 and P1' and basic residues at P2' and P3'. A model nonapeptide is cleaved at -Ala-Tyr-|-Leu-Lys-Lys-.. Its function is as follows. Has an integral role during the infection of macrophages in the mammalian host. The chain is Leishmanolysin (gp63) from Leishmania donovani.